We begin with the raw amino-acid sequence, 316 residues long: Ribosomal RNA small subunit methyltransferase H (316 aa).

S-adenosyl-L-methionine-binding positions include 32 to 34 (AGH), Asp52, Phe79, Asp106, and Gln113.

This sequence belongs to the methyltransferase superfamily. RsmH family.

Its subcellular location is the cytoplasm. The catalysed reaction is cytidine(1402) in 16S rRNA + S-adenosyl-L-methionine = N(4)-methylcytidine(1402) in 16S rRNA + S-adenosyl-L-homocysteine + H(+). Its function is as follows. Specifically methylates the N4 position of cytidine in position 1402 (C1402) of 16S rRNA. In Paenibacillus sp. (strain JDR-2), this protein is Ribosomal RNA small subunit methyltransferase H.